A 297-amino-acid chain; its full sequence is tRNA-cytidine(32) 2-sulfurtransferase (297 aa).

The PP-loop motif motif lies at 61–66; the sequence is SGGKDS. [4Fe-4S] cluster contacts are provided by cysteine 136, cysteine 139, and cysteine 227.

This sequence belongs to the TtcA family. In terms of assembly, homodimer. Mg(2+) is required as a cofactor. [4Fe-4S] cluster serves as cofactor.

It is found in the cytoplasm. The enzyme catalyses cytidine(32) in tRNA + S-sulfanyl-L-cysteinyl-[cysteine desulfurase] + AH2 + ATP = 2-thiocytidine(32) in tRNA + L-cysteinyl-[cysteine desulfurase] + A + AMP + diphosphate + H(+). It participates in tRNA modification. In terms of biological role, catalyzes the ATP-dependent 2-thiolation of cytidine in position 32 of tRNA, to form 2-thiocytidine (s(2)C32). The sulfur atoms are provided by the cysteine/cysteine desulfurase (IscS) system. The sequence is that of tRNA-cytidine(32) 2-sulfurtransferase from Paracoccus denitrificans (strain Pd 1222).